We begin with the raw amino-acid sequence, 577 residues long: Gamma-tubulin complex component gfh1 (577 aa).

This sequence belongs to the TUBGCP family.

Its subcellular location is the cytoplasm. The protein resides in the cytoskeleton. It is found in the microtubule organizing center. It localises to the spindle pole body. Its function is as follows. Required for proper anchoring of astral microtubules at the spindle pole bodies (SPBs), during anaphase, ensuring correct cell polarity. The protein is Gamma-tubulin complex component gfh1 (gfh1) of Schizosaccharomyces pombe (strain 972 / ATCC 24843) (Fission yeast).